A 208-amino-acid polypeptide reads, in one-letter code: dITP/XTP pyrophosphatase (208 aa).

Threonine 16–lysine 21 is a substrate binding site. Residues glutamate 46 and aspartate 75 each coordinate Mg(2+). Residue aspartate 75 is the Proton acceptor of the active site. Residues serine 76, phenylalanine 155–aspartate 158, lysine 178, and histidine 183–arginine 184 each bind substrate.

This sequence belongs to the HAM1 NTPase family. In terms of assembly, homodimer. It depends on Mg(2+) as a cofactor.

The enzyme catalyses XTP + H2O = XMP + diphosphate + H(+). It catalyses the reaction dITP + H2O = dIMP + diphosphate + H(+). It carries out the reaction ITP + H2O = IMP + diphosphate + H(+). In terms of biological role, pyrophosphatase that catalyzes the hydrolysis of nucleoside triphosphates to their monophosphate derivatives, with a high preference for the non-canonical purine nucleotides XTP (xanthosine triphosphate), dITP (deoxyinosine triphosphate) and ITP. Seems to function as a house-cleaning enzyme that removes non-canonical purine nucleotides from the nucleotide pool, thus preventing their incorporation into DNA/RNA and avoiding chromosomal lesions. This is dITP/XTP pyrophosphatase from Deinococcus deserti (strain DSM 17065 / CIP 109153 / LMG 22923 / VCD115).